Reading from the N-terminus, the 567-residue chain is uncharacterized protein (567 aa).

The next 12 helical transmembrane spans lie at 136 to 156, 159 to 179, 193 to 213, 217 to 237, 258 to 278, 291 to 311, 334 to 354, 364 to 384, 393 to 415, 426 to 446, 457 to 477, and 536 to 553; these read LFCLGCLWCYFSSGMVSLIFA, FMGIGGGGLITLSTIINSDII, LLLGFGAICGASFGGVLSEVF, LCFLVQVPFSVLSIAVGFFFV, ILGGLLLVSGLTSLLLVLTFG, LLLLLGILCIVAFVYVESITE, FLIGLAGYAYLFTLPLFFQLV, LRLALPSLSTPIGGLICGILM, LLFSGVFLMSLGYFLSLFIHPGI, PANVGQGIGFPSSLFSFIFAF, TLYLIRSIGSLFGVGGLSAVI, and AQQFTTICCVLALGLCIL.

Belongs to the major facilitator superfamily.

It localises to the membrane. This is an uncharacterized protein from Schizosaccharomyces pombe (strain 972 / ATCC 24843) (Fission yeast).